The chain runs to 229 residues: 2,3-bisphosphoglycerate-dependent phosphoglycerate mutase (229 aa).

Residues 7–14, 20–21, Arg-59, 86–89, Lys-97, 113–114, and 182–183 each bind substrate; these read RHGQSEWN, TG, ERHY, RR, and GN. Residue His-8 is the Tele-phosphohistidine intermediate of the active site. Glu-86 acts as the Proton donor/acceptor in catalysis.

It belongs to the phosphoglycerate mutase family. BPG-dependent PGAM subfamily.

It catalyses the reaction (2R)-2-phosphoglycerate = (2R)-3-phosphoglycerate. It participates in carbohydrate degradation; glycolysis; pyruvate from D-glyceraldehyde 3-phosphate: step 3/5. Functionally, catalyzes the interconversion of 2-phosphoglycerate and 3-phosphoglycerate. The sequence is that of 2,3-bisphosphoglycerate-dependent phosphoglycerate mutase from Listeria innocua serovar 6a (strain ATCC BAA-680 / CLIP 11262).